The primary structure comprises 922 residues: Pertactin autotransporter (922 aa).

The first 34 residues, 1-34, serve as a signal peptide directing secretion; the sequence is MNMSLSRIVKAAPLRRTTLAMALGALGAAPAAYA. A Cell attachment site; involved in adhesion to various eukaryotic cell lines motif is present at residues 260 to 262; that stretch reads RGD. Tandem repeats lie at residues 266–270, 271–275, and 276–280. Residues 266–290 form a 4 X 5 AA tandem repeats of G-G-A-V-P region; the sequence is GGAVPGGAVPGGAVPGGFGPLLDGW. A 4; approximate repeat occupies 281–285; the sequence is GGFGP. The segment at 561-619 is disordered; sequence SLVGAKAPPAPKPAPQPGPQPGPQPPQPPQPPQPPQPPQPPQRQPEAPAPQPPAGRELS. The span at 568 to 613 shows a compositional bias: pro residues; the sequence is PPAPKPAPQPGPQPGPQPPQPPQPPQPPQPPQPPQRQPEAPAPQPP. A 9 X 3 AA approximate repeats of P-Q-P region spans residues 575-603; that stretch reads PQPGPQPGPQPPQPPQPPQPPQPPQPPQR. An Autotransporter domain is found at 654-922; it reads LNPDAGGAWG…TFHAGYRYSW (269 aa).

In terms of assembly, monomer.

The protein resides in the periplasm. Its subcellular location is the secreted. It localises to the cell surface. It is found in the cell outer membrane. Agglutinogen that binds to eukaryotic cells; a process mediated by the R-G-D sequence. Pertactin may have a role in bacterial adhesion, and thus play a role in virulence. May contribute to the disease state of whooping cough. The protein is Pertactin autotransporter (prn) of Bordetella parapertussis (strain 12822 / ATCC BAA-587 / NCTC 13253).